Here is a 549-residue protein sequence, read N- to C-terminus: Probable serine/threonine-protein kinase WNK5 (549 aa).

Residues 25–283 (GRFREVLGKG…AKELLADPFL (259 aa)) form the Protein kinase domain. ATP-binding positions include 105–108 (TELF) and Lys155. Residue Asp172 is the Proton acceptor of the active site. The segment at 414–490 (ESFGHEDDED…SPAIDDDQNQ (77 aa)) is disordered. The segment covering 452–463 (DDSSNDVIPDMD) has biased composition (acidic residues). Low complexity predominate over residues 467–476 (RSSNRLLNSS). The residue at position 504 (Ser504) is a Phosphoserine. Residues 525–549 (RGRGFDPNTNELQPQPSSTDFIRRC) are disordered. The span at 531–549 (PNTNELQPQPSSTDFIRRC) shows a compositional bias: polar residues.

The protein belongs to the protein kinase superfamily. Ser/Thr protein kinase family. WNK subfamily. As to quaternary structure, interacts with AHK4.

The catalysed reaction is L-seryl-[protein] + ATP = O-phospho-L-seryl-[protein] + ADP + H(+). The enzyme catalyses L-threonyl-[protein] + ATP = O-phospho-L-threonyl-[protein] + ADP + H(+). Regulates flowering time by modulating the photoperiod pathway. This chain is Probable serine/threonine-protein kinase WNK5 (WNK5), found in Arabidopsis thaliana (Mouse-ear cress).